A 269-amino-acid polypeptide reads, in one-letter code: Peptide deformylase 1A, chloroplastic/mitochondrial (269 aa).

Residues 1–60 (MGLHRDEATAMETLFRVSLRLLPVSAAVTCRSIRFPVSRPGSSHLLNRKLYNLPTSSSSS) constitute a chloroplast and mitochondrion transit peptide. Substrate-binding positions include 123–126 (PGVG) and glycine 187. A Zn(2+)-binding site is contributed by cysteine 188. The segment at 191 to 196 (VDGFRA) is dimerization. Residue histidine 230 coordinates Zn(2+). Glutamate 231 is an active-site residue. Histidine 234 provides a ligand contact to Zn(2+). Residues 236-254 (DGNLYVDKMVPRTFRTVDN) are dimerization.

This sequence belongs to the polypeptide deformylase family. Homodimer. It depends on Zn(2+) as a cofactor. Expressed in roots, leaves, flowers and siliques.

It is found in the plastid. It localises to the chloroplast stroma. The protein resides in the mitochondrion. It carries out the reaction N-terminal N-formyl-L-methionyl-[peptide] + H2O = N-terminal L-methionyl-[peptide] + formate. Its activity is regulated as follows. Inhibited by actinonin. Its function is as follows. Removes the formyl group from the N-terminal Met of newly synthesized proteins. The sequence is that of Peptide deformylase 1A, chloroplastic/mitochondrial (PDF1A) from Arabidopsis thaliana (Mouse-ear cress).